The primary structure comprises 43 residues: Protein PsbN (43 aa).

The helical transmembrane segment at 7–27 threads the bilayer; that stretch reads VTIFISGLLVSFTGYALYIAF.

It belongs to the PsbN family.

It localises to the plastid. It is found in the chloroplast thylakoid membrane. May play a role in photosystem I and II biogenesis. The polypeptide is Protein PsbN (Dioscorea bulbifera (Air potato)).